Here is a 403-residue protein sequence, read N- to C-terminus: Argininosuccinate synthase (403 aa).

ATP is bound by residues 12–20 (AYSGGLDTS) and Ala-39. Tyr-90 and Ser-95 together coordinate L-citrulline. Gly-120 contacts ATP. Positions 122, 126, and 127 each coordinate L-aspartate. Asn-126 lines the L-citrulline pocket. L-citrulline contacts are provided by Arg-130, Ser-182, Ser-191, Glu-267, and Tyr-279.

This sequence belongs to the argininosuccinate synthase family. Type 1 subfamily. As to quaternary structure, homotetramer.

It is found in the cytoplasm. The catalysed reaction is L-citrulline + L-aspartate + ATP = 2-(N(omega)-L-arginino)succinate + AMP + diphosphate + H(+). Its pathway is amino-acid biosynthesis; L-arginine biosynthesis; L-arginine from L-ornithine and carbamoyl phosphate: step 2/3. The protein is Argininosuccinate synthase of Ruthia magnifica subsp. Calyptogena magnifica.